Consider the following 356-residue polypeptide: Heparan sulfate 2-O-sulfotransferase 1 (356 aa).

Topologically, residues 1 to 11 are cytoplasmic; it reads MGLLRIMMPPK. The helical; Signal-anchor for type II membrane protein transmembrane segment at 12-28 threads the bilayer; that stretch reads LQLLAVVAFAVAMLFLE. Residues 24–51 are a coiled coil; sequence MLFLENQIQKLEESRAKLERAIARHEVR. Topologically, residues 29-356 are lumenal; the sequence is NQIQKLEESR…FYEKIYPKSN (328 aa). Lys83, Thr84, Ala85, Ser86, Thr87, and Ser88 together coordinate adenosine 3',5'-bisphosphate. N-linked (GlcNAc...) asparagine glycans are attached at residues Asn108 and Asn127. Active-site residues include His140 and His142. 2 residues coordinate adenosine 3',5'-bisphosphate: Arg164 and Ser172. Intrachain disulfides connect Cys201–Cys209 and Cys222–Cys228. Residues Tyr279, Ser285, Thr290, and Lys293 each contribute to the adenosine 3',5'-bisphosphate site.

Belongs to the sulfotransferase 3 family. As to quaternary structure, homotrimer. Interacts with the C5-epimerase GLCE. In terms of processing, N-glycosylated. Widely expressed. Expressed at higher level in lung and brain. Weakly expressed in spleen.

The protein localises to the golgi apparatus membrane. In terms of biological role, catalyzes the transfer of a sulfo group from 3'-phospho-5'-adenylyl sulfate (PAPS) to the 2-OH position of iduronic acid (IdoA) or glucuronic acid (GlcA) within the heparan sulfate (HS) chain and participates in HS biosynthesis. Required for metanephric development of kidney formation, suggesting that 2-O-sulfation within HS is essential for signaling between ureteric bud and metanephric mesenchyme. The sequence is that of Heparan sulfate 2-O-sulfotransferase 1 from Mus musculus (Mouse).